Here is a 596-residue protein sequence, read N- to C-terminus: Nuclear receptor subfamily 2 group C member 2 (596 aa).

Ser19 carries the post-translational modification Phosphoserine; by MAPK. Ser46 carries the phosphoserine modification. Phosphoserine; by MAPK is present on residues Ser55 and Ser68. Ser98 is subject to Phosphoserine. The nuclear receptor DNA-binding region spans 114 to 189 (VEYCVVCGDK…MGMKMESVQS (76 aa)). 2 consecutive NR C4-type zinc fingers follow at residues 117 to 137 (CVVC…CEGC) and 153 to 177 (CRSS…LKKC). Lys192 is covalently cross-linked (Glycyl lysine isopeptide (Lys-Gly) (interchain with G-Cter in SUMO2)). Position 219 is a phosphoserine (Ser219). Lys231 bears the N6-acetyllysine mark. Residues 341 to 583 (GSIHVISRDQ…SIIPYILKME (243 aa)) form the NR LBD domain.

The protein belongs to the nuclear hormone receptor family. NR2 subfamily. As to quaternary structure, homodimer; can bind DNA as homodimer. Heterodimer; binds DNA as a heterodimer with NR2C1 required for chromatin remodeling and for binding to promoter regions such as globin DR1 repeats. Interacts with NR2C2AP; the interaction represses selective NR2C2-mediated transcriptional activity. Interacts with PCAF; the interaction preferentially occurs on the non-phosphorylated form and induces NR2C2-mediated transactivation activity and does not require the ligand-binding domain. Interacts (MAPK-mediated phosphorylated form) with NRIP1; the interaction promotes repression of NR2C2-mediated activity. Interacts with NLRP10. Interacts (via ligand-binding region) with transcriptional corepressor JAZF1; the interaction promotes NR2C2-mediated transcriptional repression. In terms of processing, phosphorylation on Ser-19 and Ser-68 is an important regulator of NR2C2-mediated transcriptional activity. Phosphorylation on these residues recruits the corepressor, NRIP1, leading to transcripional repression, whereas the non-phosphorylated form preferentially recruits the coactivator, PCAF. Expressed in hepatocytes. Also expressed in granule cells of the hippocampus and the cerebellum.

Its subcellular location is the nucleus. In terms of biological role, orphan nuclear receptor that can act as a repressor or activator of transcription. An important repressor of nuclear receptor signaling pathways such as retinoic acid receptor, retinoid X, vitamin D3 receptor, thyroid hormone receptor and estrogen receptor pathways. May regulate gene expression during the late phase of spermatogenesis. Activates transcriptional activity of LHCG and is antagonist of PPARA-mediated transactivation. Together with NR2C1, forms the core of the DRED (direct repeat erythroid-definitive) complex that represses embryonic and fetal globin transcription including that of GATA1. Binds to hormone response elements (HREs) consisting of two 5'-AGGTCA-3' half site direct repeat consensus sequences. Plays a fundamental role in early embryonic development and embryonic stem cells. Required for normal spermatogenesis and cerebellum development. Appears to be important for neurodevelopmentally regulated behavior. This is Nuclear receptor subfamily 2 group C member 2 (Nr2c2) from Rattus norvegicus (Rat).